The sequence spans 485 residues: Polyol:NADP oxidoreductase (485 aa).

The protein belongs to the mannitol dehydrogenase family.

It is found in the cytoplasm. The sequence is that of Polyol:NADP oxidoreductase (por) from Gluconobacter oxydans (strain 621H) (Gluconobacter suboxydans).